Consider the following 296-residue polypeptide: Ribosomal RNA small subunit methyltransferase A (296 aa).

S-adenosyl-L-methionine-binding residues include Asn-32, Leu-34, Gly-59, Glu-80, Asp-105, and Asn-130.

Belongs to the class I-like SAM-binding methyltransferase superfamily. rRNA adenine N(6)-methyltransferase family. RsmA subfamily.

It is found in the cytoplasm. The catalysed reaction is adenosine(1518)/adenosine(1519) in 16S rRNA + 4 S-adenosyl-L-methionine = N(6)-dimethyladenosine(1518)/N(6)-dimethyladenosine(1519) in 16S rRNA + 4 S-adenosyl-L-homocysteine + 4 H(+). In terms of biological role, specifically dimethylates two adjacent adenosines (A1518 and A1519) in the loop of a conserved hairpin near the 3'-end of 16S rRNA in the 30S particle. May play a critical role in biogenesis of 30S subunits. The chain is Ribosomal RNA small subunit methyltransferase A from Lactiplantibacillus plantarum (strain ATCC BAA-793 / NCIMB 8826 / WCFS1) (Lactobacillus plantarum).